We begin with the raw amino-acid sequence, 331 residues long: Probable cytosolic iron-sulfur protein assembly protein Ciao1 (331 aa).

WD repeat units follow at residues 12 to 51 (GHKG…WTTK), 57 to 96 (GHKR…ATLE), 97 to 136 (GHEN…EFEC), 142 to 181 (AHTQ…SDWD), 188 to 227 (SHTS…NEAG), 246 to 285 (QHSR…KRDE), and 297 to 331 (AHEQ…KLQE).

The protein belongs to the WD repeat CIA1 family.

Functionally, essential component of the cytosolic iron-sulfur (Fe/S) protein assembly machinery. Required for the maturation of extramitochondrial Fe/S proteins. The protein is Probable cytosolic iron-sulfur protein assembly protein Ciao1 of Drosophila grimshawi (Hawaiian fruit fly).